The sequence spans 425 residues: Protein upregulated in glial subsets pugs-5 (425 aa).

The span at 355–373 (NNNDVEKSTQIEKKPEKQG) shows a compositional bias: basic and acidic residues. The interval 355-407 (NNNDVEKSTQIEKKPEKQGPEIQEEVVEMETVKDEQPPKTSAVRFKENSPRLM) is disordered.

The chain is Protein upregulated in glial subsets pugs-5 from Caenorhabditis elegans.